The chain runs to 388 residues: UDP-galactose transporter senju (388 aa).

10 helical membrane passes run 13 to 33 (LTFV…IFVT), 46 to 66 (TVTV…CLYC), 84 to 104 (VLGL…LAFV), 113 to 133 (TYYL…QIIF), 142 to 162 (WISL…FGSF), 202 to 222 (FSLS…AGVY), 236 to 256 (IFVQ…VILL), 276 to 296 (FSVL…SFFL), 309 to 329 (ALEL…PIYM), and 331 to 351 (TALA…SPVV).

The protein belongs to the nucleotide-sugar transporter family.

The protein localises to the golgi apparatus membrane. UDP-galactose transporter involved in the synthesis of galactose-containing glycans. Plays a role in quiescence of the innate immune response, possibly by regulating glycosylation of the Toll pathway ligand spz. In Drosophila melanogaster (Fruit fly), this protein is UDP-galactose transporter senju.